The sequence spans 44 residues: uncharacterized protein (44 aa).

The chain crosses the membrane as a helical span at residues 4 to 24 (ISSILIRGGGVLIVVILLLWI).

The protein localises to the membrane. This is an uncharacterized protein from Ornithodoros (relapsing fever ticks).